The chain runs to 164 residues: Small ribosomal subunit protein uS5 (164 aa).

The region spanning 10-73 (IEERVVAINR…ESAKKNMIEV (64 aa)) is the S5 DRBM domain.

This sequence belongs to the universal ribosomal protein uS5 family. In terms of assembly, part of the 30S ribosomal subunit. Contacts proteins S4 and S8.

Its function is as follows. With S4 and S12 plays an important role in translational accuracy. Located at the back of the 30S subunit body where it stabilizes the conformation of the head with respect to the body. The chain is Small ribosomal subunit protein uS5 from Streptococcus suis (strain 98HAH33).